Consider the following 172-residue polypeptide: Diphosphoinositol polyphosphate phosphohydrolase 1 (172 aa).

Residue Met1 is modified to N-acetylmethionine. Substrate contacts are provided by residues Arg10, Lys18–Arg20, and Ser39–Arg41. Positions Tyr17 to Arg144 constitute a Nudix hydrolase domain. Mg(2+)-binding residues include Gly50 and Glu66. Positions Gly51 to Gly72 match the Nudix box motif. Catalysis depends on Glu69, which acts as the Proton acceptor. Mg(2+) is bound at residue Glu70. Substrate is bound by residues Arg89–His91, Arg115, and Lys133.

The protein belongs to the Nudix hydrolase family. DIPP subfamily. In terms of assembly, monomer. Mg(2+) serves as cofactor. The cofactor is Mn(2+). It depends on Zn(2+) as a cofactor.

It localises to the cytoplasm. The protein resides in the nucleus. The enzyme catalyses diphospho-myo-inositol polyphosphate + H2O = myo-inositol polyphosphate + phosphate.. The catalysed reaction is 5-diphospho-1D-myo-inositol 1,2,3,4,6-pentakisphosphate + H2O = 1D-myo-inositol hexakisphosphate + phosphate + H(+). It catalyses the reaction 3,5-bis(diphospho)-1D-myo-inositol 1,2,4,6-tetrakisphosphate + H2O = 3-diphospho-1D-myo-inositol 1,2,4,5,6-pentakisphosphate + phosphate + 2 H(+). It carries out the reaction [phosphate](n+1) + n H2O = (n+1) phosphate + n H(+). The enzyme catalyses P(1),P(5)-bis(5'-adenosyl) pentaphosphate + H2O = ADP + ATP + 2 H(+). The catalysed reaction is P(1),P(6)-bis(5'-adenosyl) hexaphosphate + H2O = 2 ATP + 2 H(+). It catalyses the reaction P(1),P(4)-bis(5'-adenosyl) tetraphosphate + H2O = AMP + ATP + 2 H(+). It carries out the reaction a 5'-end (N(7)-methyl 5'-triphosphoguanosine)-ribonucleoside in mRNA + H2O = N(7)-methyl-GMP + a 5'-end diphospho-ribonucleoside in mRNA + 2 H(+). The enzyme catalyses a 5'-end (N(7)-methyl 5'-triphosphoguanosine)-ribonucleoside in mRNA + H2O = N(7)-methyl-GDP + a 5'-end phospho-ribonucleoside in mRNA + 2 H(+). Functionally, cleaves a beta-phosphate from the diphosphate groups in PP-InsP5 (diphosphoinositol pentakisphosphate) and [PP]2-InsP4 (bisdiphosphoinositol tetrakisphosphate), suggesting that it may play a role in signal transduction. InsP6 (inositol hexakisphosphate) is not a substrate. Also able to catalyze the hydrolysis of dinucleoside oligophosphates, with diadenosine 5',5'''-P1,P6-hexaphosphate (Ap6A) and diadenosine 5',5'''- P1,P5-pentaphosphate (Ap5A) being the preferred substrates. The major reaction products are ADP and p4a from Ap6A and ADP and ATP from Ap5A. Also able to hydrolyze 5- phosphoribose 1-diphosphate. Acts as a decapping enzyme that can hydrolyze both monomethylated and unmethylated capped RNAs. Hydrolyzes monomethylated capped RNA after both the alpha- and beta-phosphates generating m7GMP + ppRNA and m7GDP + pRNA. Modulates the stability of a subset of mRNAs implicated in cell motility. Divalent cations zinc, magnesium and manganese determine its substrate specificity. Exhibits diphosphoinositol polyphosphate phosphohydrolase in the presence of magnesium ions, diadenosine hexaphosphate hydrolase activity in the presence of manganese ions and endopolyphosphatase activity in the presence of zinc ions. Plays an important role in limiting DNA damage and maintaining cell survival upon oxidative stress via its endopolyphosphatase activity. This chain is Diphosphoinositol polyphosphate phosphohydrolase 1, found in Bos taurus (Bovine).